A 63-amino-acid chain; its full sequence is Cytochrome c oxidase subunit 7C, mitochondrial (63 aa).

Residues 1–16 (MLGQSIRRFTTSVVRR) constitute a mitochondrion transit peptide. Residues 17–33 (SHYEEGPGKNLPFSVEN) are Mitochondrial matrix-facing. The residue at position 25 (lysine 25) is an N6-acetyllysine; alternate. Lysine 25 bears the N6-succinyllysine; alternate mark. A helical transmembrane segment spans residues 34-60 (KWSLLAKMCLYFGSAFATPFLIVRHQL). The Mitochondrial intermembrane segment spans residues 61 to 63 (LKT).

This sequence belongs to the cytochrome c oxidase VIIc family. In terms of assembly, component of the cytochrome c oxidase (complex IV, CIV), a multisubunit enzyme composed of 14 subunits. The complex is composed of a catalytic core of 3 subunits MT-CO1, MT-CO2 and MT-CO3, encoded in the mitochondrial DNA, and 11 supernumerary subunits COX4I, COX5A, COX5B, COX6A, COX6B, COX6C, COX7A, COX7B, COX7C, COX8 and NDUFA4, which are encoded in the nuclear genome. The complex exists as a monomer or a dimer and forms supercomplexes (SCs) in the inner mitochondrial membrane with NADH-ubiquinone oxidoreductase (complex I, CI) and ubiquinol-cytochrome c oxidoreductase (cytochrome b-c1 complex, complex III, CIII), resulting in different assemblies (supercomplex SCI(1)III(2)IV(1) and megacomplex MCI(2)III(2)IV(2)). Interacts with RAB5IF.

It localises to the mitochondrion inner membrane. The protein operates within energy metabolism; oxidative phosphorylation. Component of the cytochrome c oxidase, the last enzyme in the mitochondrial electron transport chain which drives oxidative phosphorylation. The respiratory chain contains 3 multisubunit complexes succinate dehydrogenase (complex II, CII), ubiquinol-cytochrome c oxidoreductase (cytochrome b-c1 complex, complex III, CIII) and cytochrome c oxidase (complex IV, CIV), that cooperate to transfer electrons derived from NADH and succinate to molecular oxygen, creating an electrochemical gradient over the inner membrane that drives transmembrane transport and the ATP synthase. Cytochrome c oxidase is the component of the respiratory chain that catalyzes the reduction of oxygen to water. Electrons originating from reduced cytochrome c in the intermembrane space (IMS) are transferred via the dinuclear copper A center (CU(A)) of subunit 2 and heme A of subunit 1 to the active site in subunit 1, a binuclear center (BNC) formed by heme A3 and copper B (CU(B)). The BNC reduces molecular oxygen to 2 water molecules using 4 electrons from cytochrome c in the IMS and 4 protons from the mitochondrial matrix. This is Cytochrome c oxidase subunit 7C, mitochondrial (COX7C) from Pongo pygmaeus (Bornean orangutan).